The primary structure comprises 141 residues: Large ribosomal subunit protein uL11 (141 aa).

Belongs to the universal ribosomal protein uL11 family. As to quaternary structure, part of the ribosomal stalk of the 50S ribosomal subunit. Interacts with L10 and the large rRNA to form the base of the stalk. L10 forms an elongated spine to which L12 dimers bind in a sequential fashion forming a multimeric L10(L12)X complex. Post-translationally, one or more lysine residues are methylated.

In terms of biological role, forms part of the ribosomal stalk which helps the ribosome interact with GTP-bound translation factors. The sequence is that of Large ribosomal subunit protein uL11 from Syntrophomonas wolfei subsp. wolfei (strain DSM 2245B / Goettingen).